Reading from the N-terminus, the 446-residue chain is tRNA-2-methylthio-N(6)-dimethylallyladenosine synthase (446 aa).

The 122-residue stretch at 3–124 (KKLYIKTYGC…LPELISKVVR (122 aa)) folds into the MTTase N-terminal domain. [4Fe-4S] cluster is bound by residues C12, C48, C87, C162, C166, and C169. One can recognise a Radical SAM core domain in the interval 148–380 (YPQGASSFIS…QKELAAQQLA (233 aa)). Residues 383-446 (ESCIGSTMKV…LNSLSGEIYR (64 aa)) enclose the TRAM domain.

This sequence belongs to the methylthiotransferase family. MiaB subfamily. As to quaternary structure, monomer. Requires [4Fe-4S] cluster as cofactor.

It is found in the cytoplasm. It carries out the reaction N(6)-dimethylallyladenosine(37) in tRNA + (sulfur carrier)-SH + AH2 + 2 S-adenosyl-L-methionine = 2-methylsulfanyl-N(6)-dimethylallyladenosine(37) in tRNA + (sulfur carrier)-H + 5'-deoxyadenosine + L-methionine + A + S-adenosyl-L-homocysteine + 2 H(+). Catalyzes the methylthiolation of N6-(dimethylallyl)adenosine (i(6)A), leading to the formation of 2-methylthio-N6-(dimethylallyl)adenosine (ms(2)i(6)A) at position 37 in tRNAs that read codons beginning with uridine. The polypeptide is tRNA-2-methylthio-N(6)-dimethylallyladenosine synthase (Rickettsia bellii (strain OSU 85-389)).